A 208-amino-acid polypeptide reads, in one-letter code: ATP phosphoribosyltransferase (208 aa).

This sequence belongs to the ATP phosphoribosyltransferase family. Short subfamily. Heteromultimer composed of HisG and HisZ subunits.

The protein resides in the cytoplasm. The enzyme catalyses 1-(5-phospho-beta-D-ribosyl)-ATP + diphosphate = 5-phospho-alpha-D-ribose 1-diphosphate + ATP. It participates in amino-acid biosynthesis; L-histidine biosynthesis; L-histidine from 5-phospho-alpha-D-ribose 1-diphosphate: step 1/9. Catalyzes the condensation of ATP and 5-phosphoribose 1-diphosphate to form N'-(5'-phosphoribosyl)-ATP (PR-ATP). Has a crucial role in the pathway because the rate of histidine biosynthesis seems to be controlled primarily by regulation of HisG enzymatic activity. In Thermotoga maritima (strain ATCC 43589 / DSM 3109 / JCM 10099 / NBRC 100826 / MSB8), this protein is ATP phosphoribosyltransferase (hisG).